Consider the following 267-residue polypeptide: Syntaxin-72 (267 aa).

Over 1-244 (MPVIDIIFRV…QLVQMRSSRN (244 aa)) the chain is Cytoplasmic. A coiled-coil region spans residues 53–87 (KAELASTEKNRAAAVAMNAEVRRTKARLAEDVVKL). A t-SNARE coiled-coil homology domain is found at 173–235 (EMRRKKQDEG…KNTNVRLKKQ (63 aa)). Residues 245–265 (FCIDIILLCVILGIVSYIYNA) form a helical; Anchor for type IV membrane protein membrane-spanning segment. At 266-267 (LN) the chain is on the vesicular side.

This sequence belongs to the syntaxin family. As to quaternary structure, part of the t-SNARE complex. In terms of tissue distribution, expressed in root, leaf, stem, flower and silique.

The protein resides in the membrane. Functionally, vesicle trafficking protein that functions in the secretory pathway. This chain is Syntaxin-72 (SYP72), found in Arabidopsis thaliana (Mouse-ear cress).